The sequence spans 394 residues: MEITQVIYVNDHNNIEANLTGQEEMNTTMEIESSSVPQSKNYKKWLRISIYVFFVLACQALSTILGRVYYENGGKSTWMGTLVQLIGFPVLFLFRFFSQTKNPKPTEADFRKFSSFTILGSVYIVTGLLVSANSYMSSVGLLYLPVSTFSLILASQLAFTAFFSYFLNSQKFTPFIVNSLFLLTISSALLVVNTDSENTAKVSRVKYVIGIICTIGASAGIGLLLSLVQLILRKVLKKQTFSTVTDLVAYQSLVASCVVLIGLFASGEWKTLTSEMENYKLGKVPYVMTLASIAISWQVYTIGVVGLIFESSSVFSNSITAVGLPIVPVVAVIVFHDKMNASKIFSIILAIWGFISFVYQHYLDEKKLKTSHTSPVGDPHLLPAEEGHTNIHSV.

Transmembrane regions (helical) follow at residues 45–65 (WLRI…STIL), 77–97 (TWMG…FRFF), 113–133 (FSSF…VSAN), 139–159 (VGLL…QLAF), 172–192 (FTPF…LLVV), 208–228 (VIGI…LSLV), 247–267 (LVAY…FASG), 289–309 (TLAS…GLIF), 315–335 (FSNS…VIVF), and 344–364 (IFSI…HYLD). Residues 373–394 (TSPVGDPHLLPAEEGHTNIHSV) form a disordered region. Residues 383–394 (PAEEGHTNIHSV) are compositionally biased toward basic and acidic residues.

It belongs to the purine permeases (TC 2.A.7.14) family.

Its subcellular location is the membrane. The protein is Probable purine permease 8 (PUP8) of Arabidopsis thaliana (Mouse-ear cress).